A 114-amino-acid polypeptide reads, in one-letter code: Large ribosomal subunit protein uL22 (114 aa).

It belongs to the universal ribosomal protein uL22 family. As to quaternary structure, part of the 50S ribosomal subunit.

Its function is as follows. This protein binds specifically to 23S rRNA; its binding is stimulated by other ribosomal proteins, e.g. L4, L17, and L20. It is important during the early stages of 50S assembly. It makes multiple contacts with different domains of the 23S rRNA in the assembled 50S subunit and ribosome. Functionally, the globular domain of the protein is located near the polypeptide exit tunnel on the outside of the subunit, while an extended beta-hairpin is found that lines the wall of the exit tunnel in the center of the 70S ribosome. In Streptococcus sanguinis (strain SK36), this protein is Large ribosomal subunit protein uL22.